The chain runs to 254 residues: Phosphoribosylaminoimidazole-succinocarboxamide synthase (254 aa).

The protein belongs to the SAICAR synthetase family.

It catalyses the reaction 5-amino-1-(5-phospho-D-ribosyl)imidazole-4-carboxylate + L-aspartate + ATP = (2S)-2-[5-amino-1-(5-phospho-beta-D-ribosyl)imidazole-4-carboxamido]succinate + ADP + phosphate + 2 H(+). It functions in the pathway purine metabolism; IMP biosynthesis via de novo pathway; 5-amino-1-(5-phospho-D-ribosyl)imidazole-4-carboxamide from 5-amino-1-(5-phospho-D-ribosyl)imidazole-4-carboxylate: step 1/2. This Bartonella henselae (strain ATCC 49882 / DSM 28221 / CCUG 30454 / Houston 1) (Rochalimaea henselae) protein is Phosphoribosylaminoimidazole-succinocarboxamide synthase.